A 261-amino-acid chain; its full sequence is MIETYNQTSPRSAATGLPISMKIFMYLLTVFLITQMIGSALFAVYLHRRLDKIEDERNLHEDFVFMKTIQRCNTGERSLSLLNCEEIKSQFEGFVKDIMLNKEETKKENSFEMQKGDQNPQIAAHVISEASSKTTSVLQWAEKGYYTMSNNLVTLENGKQLTVKRQGLYYIYAQVTFCSNREASSQAPFIASLCLKSPGRFERILLRAANTHSSAKPCGQQSIHLGGVFELQPGASVFVNVTDPSQVSHGTGFTSFGLLKL.

The Cytoplasmic portion of the chain corresponds to 1–22 (MIETYNQTSPRSAATGLPISMK). A helical; Signal-anchor for type II membrane protein transmembrane segment spans residues 23–46 (IFMYLLTVFLITQMIGSALFAVYL). Residues 47–261 (HRRLDKIEDE…GFTSFGLLKL (215 aa)) are Extracellular-facing. Residues 122 to 261 (IAAHVISEAS…GFTSFGLLKL (140 aa)) enclose the THD domain. A disulfide bridge connects residues cysteine 178 and cysteine 218. Asparagine 240 carries an N-linked (GlcNAc...) (complex) asparagine; alternate glycan. Asparagine 240 carries an N-linked (GlcNAc...) (high mannose) asparagine; alternate glycan.

It belongs to the tumor necrosis factor family. As to quaternary structure, homotrimer. Interacts with isoform 3 of CD28. CD40 ligand, soluble form: Exists as either a monomer or a homotrimer. Forms a ternary complex between CD40 and integrins for CD40-CD40LG signaling. The soluble form derives from the membrane form by proteolytic processing. In terms of processing, N-linked glycan is a mixture of high mannose and complex type. Glycan structure does not influence binding affinity to CD40. Post-translationally, not O-glycosylated. As to expression, specifically expressed on activated CD4+ T-lymphocytes.

It localises to the cell membrane. Its subcellular location is the cell surface. It is found in the secreted. Its function is as follows. Cytokine that acts as a ligand to CD40/TNFRSF5. Costimulates T-cell proliferation and cytokine production. Its cross-linking on T-cells generates a costimulatory signal which enhances the production of IL4 and IL10 in conjunction with the TCR/CD3 ligation and CD28 costimulation. Induces the activation of NF-kappa-B. Induces the activation of kinases MAPK8 and PAK2 in T-cells. Induces tyrosine phosphorylation of isoform 3 of CD28. Mediates B-cell proliferation in the absence of co-stimulus as well as IgE production in the presence of IL4. Involved in immunoglobulin class switching. Acts as a ligand for integrins, specifically ITGA5:ITGB1 and ITGAV:ITGB3; both integrins and the CD40 receptor are required for activation of CD40-CD40LG signaling, which have cell-type dependent effects, such as B-cell activation, NF-kappa-B signaling and anti-apoptotic signaling. In Homo sapiens (Human), this protein is CD40 ligand (CD40LG).